The chain runs to 350 residues: Ferredoxin--NADP reductase (350 aa).

Residues aspartate 49, glutamine 57, tyrosine 62, valine 102, phenylalanine 136, aspartate 303, and threonine 344 each coordinate FAD.

Belongs to the ferredoxin--NADP reductase type 2 family. As to quaternary structure, homodimer. Requires FAD as cofactor.

It catalyses the reaction 2 reduced [2Fe-2S]-[ferredoxin] + NADP(+) + H(+) = 2 oxidized [2Fe-2S]-[ferredoxin] + NADPH. The polypeptide is Ferredoxin--NADP reductase (Granulibacter bethesdensis (strain ATCC BAA-1260 / CGDNIH1)).